A 127-amino-acid polypeptide reads, in one-letter code: Fatty acid-binding protein, liver (127 aa).

An N-acetylmethionine modification is found at methionine 1. Residues lysine 31 and lysine 36 each carry the N6-succinyllysine modification. Residue serine 39 is modified to Phosphoserine. Residue lysine 46 is modified to N6-succinyllysine. Phosphoserine is present on serine 56. Lysine 57, lysine 78, and lysine 90 each carry N6-succinyllysine. Serine 100 is subject to Phosphoserine. Deamidated asparagine; alternate is present on asparagine 105. The isoaspartyl glycine isopeptide (Asn-Gly); alternate cross-link spans 105 to 106; that stretch reads NG. Residue lysine 121 is modified to N6-succinyllysine.

The protein belongs to the calycin superfamily. Fatty-acid binding protein (FABP) family. Monomer. In terms of processing, deamidation and transpeptidation at the beta carboxyl of Asn-105 forms an isoaspartyl residue and Edman degradation appears as though blocked. This rearrangement gives rise to an extra negative charge carried by the acid form.

Its subcellular location is the cytoplasm. Plays a role in lipoprotein-mediated cholesterol uptake in hepatocytes. Binds cholesterol. Binds free fatty acids and their coenzyme A derivatives, bilirubin, and some other small molecules in the cytoplasm. May be involved in intracellular lipid transport. This Bos taurus (Bovine) protein is Fatty acid-binding protein, liver (FABP1).